Consider the following 342-residue polypeptide: MLQGYSSVVQALLGTFFTWAMTAAGAALVFIFSSGQRRILDGSLGFAAGVMLAASYWSLLAPAVEMATSSGGFGAFAFFPVAVGFTLGAAFVYLADLLMPHLGATEDPQTALALNLDPALMKKSDPRDPTSLLFPESELSIRIGSTGLLSDKRENGEVYQRKKVAATDLAEGVAPSGSMHGSSGQPGGSSWRRIALLILAITIHNIPEGLAVGVGFGAVEKTASATFESARNLAIGIGIQNFPEGLAVSLPLRGAGFSTWKAFWYGQLSGMVEPLAGVFGAFAVVLAEPILPYALAFAAGAMVYVVMDDIIPEAQISGNGKLASWASILGFVVMMSLDVGLG.

Transmembrane regions (helical) follow at residues 12-32 (LLGT…VFIF), 44-64 (LGFA…APAV), 72-92 (GFGA…AAFV), 194-214 (IALL…AVGV), 263-285 (FWYG…FAVV), 290-307 (ILPY…YVVM), and 322-342 (LASW…VGLG).

The protein belongs to the ZIP transporter (TC 2.A.5) family. In terms of tissue distribution, highly expressed in the testes and portions of the digestive system including the stomach, ileum and cecum. In contrast, expressed at very low levels in liver, duodenum, jejunum, and colon.

Its subcellular location is the cell membrane. The protein resides in the nucleus. It is found in the cytoplasm. The protein localises to the golgi apparatus. It carries out the reaction Zn(2+)(in) = Zn(2+)(out). It catalyses the reaction Cu(2+)(in) = Cu(2+)(out). Zinc importer that regulates cytosolic zinc concentration either via zinc influx from the extracellular compartment or efflux from intracellular organelles such as Golgi apparatus. May transport copper ions as well. The transport mechanism remains to be elucidated. This is Zinc transporter ZIP11 (Slc39a11) from Mus musculus (Mouse).